Here is a 229-residue protein sequence, read N- to C-terminus: AA9 family lytic polysaccharide monooxygenase E (229 aa).

A signal peptide spans 1 to 19 (MRSSDITFVLLSVVATVRS). A Cu(2+)-binding site is contributed by H20. Residues C57 and C178 are joined by a disulfide bond. N-linked (GlcNAc...) asparagine glycosylation occurs at N76. Residue H99 participates in Cu(2+) binding. The O2 site is built by H164 and Q173. Y175 lines the Cu(2+) pocket. A glycan (N-linked (GlcNAc...) asparagine) is linked at N217.

Belongs to the polysaccharide monooxygenase AA9 family. Cu(2+) is required as a cofactor.

The protein resides in the secreted. It carries out the reaction [(1-&gt;4)-beta-D-glucosyl]n+m + reduced acceptor + O2 = 4-dehydro-beta-D-glucosyl-[(1-&gt;4)-beta-D-glucosyl]n-1 + [(1-&gt;4)-beta-D-glucosyl]m + acceptor + H2O.. Its function is as follows. Lytic polysaccharide monooxygenase (LPMO) that depolymerizes crystalline and amorphous polysaccharides via the oxidation of scissile alpha- or beta-(1-4)-glycosidic bonds, yielding C1 and C4 oxidation products. Catalysis by LPMOs requires the reduction of the active-site copper from Cu(II) to Cu(I) by a reducing agent and H(2)O(2) or O(2) as a cosubstrate. This chain is AA9 family lytic polysaccharide monooxygenase E, found in Botryotinia fuckeliana (strain B05.10) (Noble rot fungus).